Here is a 481-residue protein sequence, read N- to C-terminus: Pyruvate kinase (481 aa).

Arg-36 is a binding site for substrate. Residues Asn-38, Ser-40, and Asp-70 each coordinate K(+). 38 to 41 serves as a coordination point for ATP; that stretch reads NFSH. 2 residues coordinate ATP: Arg-77 and Lys-160. Glu-225 provides a ligand contact to Mg(2+). Substrate contacts are provided by Gly-251, Asp-252, and Thr-284. Asp-252 serves as a coordination point for Mg(2+).

This sequence belongs to the pyruvate kinase family. As to quaternary structure, homotetramer. The cofactor is Mg(2+). K(+) is required as a cofactor.

The enzyme catalyses pyruvate + ATP = phosphoenolpyruvate + ADP + H(+). It participates in carbohydrate degradation; glycolysis; pyruvate from D-glyceraldehyde 3-phosphate: step 5/5. Its activity is regulated as follows. Allosterically activated by AMP and by several sugar phosphates. Belongs to type II PK. In Buchnera aphidicola subsp. Schizaphis graminum (strain Sg), this protein is Pyruvate kinase (pykA).